A 407-amino-acid polypeptide reads, in one-letter code: Cell division control protein 12 (407 aa).

N-acetylserine is present on Ser2. One can recognise a Septin-type G domain in the interval 31–314 (EGGTFTVMLC…ETYRRLRLEG (284 aa)). Residues 41 to 48 (GESGLGKT) form a G1 motif region. Residues 41 to 48 (GESGLGKT), Thr75, Gly101, 180 to 188 (KADTLTAQE), Gly247, and Arg263 contribute to the GTP site. Residues 98-101 (DTPG) form a G3 motif region. Residues 179-182 (AKAD) form a G4 motif region. A coiled-coil region spans residues 344–406 (EEENALKKYF…KSLQVKKSHL (63 aa)).

It belongs to the TRAFAC class TrmE-Era-EngA-EngB-Septin-like GTPase superfamily. Septin GTPase family. As to quaternary structure, component of the septin complex which consists of CDC3, CDC10, CDC11, CDC12 and probably SHS1 and rearranges to a cortical collar of highly ordered filaments at the mother-bud-neck. A complex formed by CDC3, CDC10, CDC11 and CDC12 is capable of forming long filaments in vitro and the components seem to be present in a 2:2:2:2 arrangement in vivo. The filaments are proposed to be formed by the end-to-end polymerization of CDC3-CDC12-CDC11 complexes with CDC10 serving as a bridge to bundle the polymers into paired filaments. Component of the GIN4 complex composed of at least BNI5, CDC3, CDC10, CDC11, CDC12, GIN4, NAP1 and SHS1. Self-associates. Interacts with SYP1.

It localises to the membrane. The protein resides in the bud neck. Its function is as follows. Septins are GTPases involved in cytokinesis that assemble early in the cell cycle as a patch at the incipient bud site and form a ring approximate 15 minutes before bud emergence, which transforms into an hour-glass shaped collar of cortical filaments that spans both sides of the mother-bud neck. This collar persists until just before cytokinesis, when it splits into two rings that occupy opposite sides of the neck. The septins at the bud neck serve as a structural scaffold that recruits different components involved in diverse processes at specific stages during the cell cycle. Many proteins bind asymmetrically to the septin collar. The septin assembly is regulated by protein kinases GIN4 and/or CLA4. May act by recruiting MYO1 and HOF1, a protein involved in septation, to the site of cleavage. Septins are also involved in cell morphogenesis, bud site selection, chitin deposition, cell cycle regulation, cell compartmentalization and spore wall formation. This chain is Cell division control protein 12 (CDC12), found in Saccharomyces cerevisiae (strain ATCC 204508 / S288c) (Baker's yeast).